We begin with the raw amino-acid sequence, 134 residues long: Putative pre-16S rRNA nuclease (134 aa).

It belongs to the YqgF nuclease family.

Its subcellular location is the cytoplasm. Its function is as follows. Could be a nuclease involved in processing of the 5'-end of pre-16S rRNA. The sequence is that of Putative pre-16S rRNA nuclease from Helicobacter pylori (strain ATCC 700392 / 26695) (Campylobacter pylori).